A 448-amino-acid polypeptide reads, in one-letter code: 4-hydroxybenzoate transporter PcaK (448 aa).

Residues Met-1 to Val-30 lie on the Cytoplasmic side of the membrane. The chain crosses the membrane as a helical span at residues Val-31–Ile-51. Residues Ala-52 to Gly-67 are Periplasmic-facing. The chain crosses the membrane as a helical span at residues Pro-68–Ala-88. Residues Asp-89–Lys-94 are Cytoplasmic-facing. Residues Gly-95 to Thr-115 form a helical membrane-spanning segment. At Asn-116–Gln-119 the chain is on the periplasmic side. Residues Leu-120 to Thr-140 form a helical membrane-spanning segment. At Leu-141 to Ser-152 the chain is on the cytoplasmic side. A helical transmembrane segment spans residues Leu-153–Ser-173. At Ala-174–Ser-184 the chain is on the periplasmic side. A helical transmembrane segment spans residues Leu-185–Pro-205. Over Glu-206–Tyr-261 the chain is Cytoplasmic. A helical transmembrane segment spans residues Gly-262–Leu-282. Topologically, residues Thr-283–Ala-301 are periplasmic. The chain crosses the membrane as a helical span at residues Phe-302–Met-322. Over Asp-323–Lys-329 the chain is Cytoplasmic. Residues Val-330 to Gly-350 form a helical membrane-spanning segment. Asn-351 is a topological domain (periplasmic). The helical transmembrane segment at Ile-352–Ala-372 threads the bilayer. The Cytoplasmic segment spans residues Met-373–Arg-398. The helical transmembrane segment at Phe-399 to Glu-419 threads the bilayer. The Periplasmic segment spans residues Gln-420–Val-421. The helical transmembrane segment at Leu-422–Val-442 threads the bilayer. The Cytoplasmic portion of the chain corresponds to Ser-443–Thr-448.

The protein belongs to the major facilitator superfamily. Aromatic acid:H(+) symporter (AAHS) (TC 2.A.1.15) family.

The protein localises to the cell inner membrane. Transports 4-hydroxybenzoate (4-HBA) and protocatechuate across the membrane. Driven by the proton motive force. Also functions as a chemoreceptor, which is required for chemotaxis to aromatic acids. The protein is 4-hydroxybenzoate transporter PcaK (pcaK) of Pseudomonas putida (Arthrobacter siderocapsulatus).